The primary structure comprises 335 residues: Galactosylgalactosylxylosylprotein 3-beta-glucuronosyltransferase 3 (335 aa).

The Cytoplasmic portion of the chain corresponds to 1-7 (MKLKLKN). The chain crosses the membrane as a helical; Signal-anchor for type II membrane protein span at residues 8-28 (VFLAYFLVSIAGLLYALVQLG). Topologically, residues 29–335 (QPCDCLPPLR…GQGSDPAIEV (307 aa)) are lumenal. UDP-alpha-D-glucuronate is bound by residues 82-84 (PTY), Asp-113, Arg-156, Arg-161, and 194-196 (DDD). Residue Asp-196 coordinates Mn(2+). The tract at residues 243–252 (WEPNRPFPLD) is interaction with galactose moiety of substrate glycoprotein. Residue Glu-281 is the Proton donor/acceptor of the active site. N-linked (GlcNAc...) asparagine glycosylation occurs at Asn-300. 308–310 (HTR) contacts UDP-alpha-D-glucuronate. The segment covering 312–322 (EKPKMKQEEQL) has biased composition (basic and acidic residues). The segment at 312 to 335 (EKPKMKQEEQLQRQGQGSDPAIEV) is disordered.

Belongs to the glycosyltransferase 43 family. In terms of assembly, homodimer; disulfide-linked. Interacts with PXYLP1; the interaction increases the 2-phosphoxylose phosphatase activity of PXYLP1 during completion of linkage region formation in a B3GAT3-mediated manner. It depends on Mn(2+) as a cofactor. N-glycosylated. In terms of tissue distribution, expressed in heart, aorta, bone, and also in osteoblasts.

The protein localises to the golgi apparatus membrane. It localises to the golgi apparatus. The protein resides in the cis-Golgi network. The catalysed reaction is 3-O-(beta-D-galactosyl-(1-&gt;3)-beta-D-galactosyl-(1-&gt;4)-beta-D-xylosyl)-L-seryl-[protein] + UDP-alpha-D-glucuronate = 3-O-(beta-D-GlcA-(1-&gt;3)-beta-D-Gal-(1-&gt;3)-beta-D-Gal-(1-&gt;4)-beta-D-Xyl)-L-seryl-[protein] + UDP + H(+). It participates in protein modification; protein glycosylation. Its function is as follows. Glycosaminoglycans biosynthesis. Involved in forming the linkage tetrasaccharide present in heparan sulfate and chondroitin sulfate. Transfers a glucuronic acid moiety from the uridine diphosphate-glucuronic acid (UDP-GlcUA) to the common linkage region trisaccharide Gal-beta-1,3-Gal-beta-1,4-Xyl covalently bound to a Ser residue at the glycosaminylglycan attachment site of proteoglycans. Can also play a role in the biosynthesis of l2/HNK-1 carbohydrate epitope on glycoproteins. Stimulates 2-phosphoxylose phosphatase activity of PXYLP1 in presence of uridine diphosphate-glucuronic acid (UDP-GlcUA) during completion of linkage region formation. The sequence is that of Galactosylgalactosylxylosylprotein 3-beta-glucuronosyltransferase 3 (B3gat3) from Mus musculus (Mouse).